Here is an 87-residue protein sequence, read N- to C-terminus: Small ribosomal subunit protein uS17 (87 aa).

It belongs to the universal ribosomal protein uS17 family. Part of the 30S ribosomal subunit.

Its function is as follows. One of the primary rRNA binding proteins, it binds specifically to the 5'-end of 16S ribosomal RNA. This is Small ribosomal subunit protein uS17 from Alcanivorax borkumensis (strain ATCC 700651 / DSM 11573 / NCIMB 13689 / SK2).